A 165-amino-acid chain; its full sequence is Endoribonuclease YbeY (165 aa).

Residues His-130, His-134, and His-140 each contribute to the Zn(2+) site.

This sequence belongs to the endoribonuclease YbeY family. The cofactor is Zn(2+).

It localises to the cytoplasm. Its function is as follows. Single strand-specific metallo-endoribonuclease involved in late-stage 70S ribosome quality control and in maturation of the 3' terminus of the 16S rRNA. The sequence is that of Endoribonuclease YbeY from Streptococcus pyogenes serotype M1.